The primary structure comprises 193 residues: uncharacterized protein (193 aa).

Helical transmembrane passes span 40–56, 63–79, 86–110, and 117–138; these read LYIA…LKLI, AAGL…SSLC, CSGY…IVSC, and FIFP…FQIY. Residues 158–193 form a disordered region; sequence TTTKLSRSSSAPDLSCPSLSTQPTSPNQSLSAYKKY.

Belongs to the chlamydial CPn_0442/CT_006/TC_0274 family.

The protein localises to the cell membrane. This is an uncharacterized protein from Chlamydia muridarum (strain MoPn / Nigg).